Reading from the N-terminus, the 412-residue chain is Adenosine receptor A2a (412 aa).

The Extracellular portion of the chain corresponds to 1–7 (MPTVGSL). Residues 8–32 (VYIMVELAIALLAILGNMLVCWAVW) traverse the membrane as a helical segment. The Cytoplasmic segment spans residues 33 to 42 (LNSNLQNVTN). The chain crosses the membrane as a helical span at residues 43 to 66 (YFVVSLAAADIAVGVLAIPFAITI). Residues 67 to 77 (STGFCAACHGC) are Extracellular-facing. 3 cysteine pairs are disulfide-bonded: cysteine 71/cysteine 159, cysteine 74/cysteine 146, and cysteine 77/cysteine 166. Residues 78 to 100 (LFIACFVLVLTQSSIFSLLAIAI) form a helical membrane-spanning segment. Residues 101–120 (DRYIAIRIPLRYNGLVTGTR) are Cytoplasmic-facing. The helical transmembrane segment at 121-143 (AKGVIAVCWVLSFAIGLTPMLGW) threads the bilayer. At 144–173 (NNCHHWGEGENQSQGCGEGQVACLFEDVVP) the chain is on the extracellular side. An N-linked (GlcNAc...) asparagine glycan is attached at asparagine 154. Glutamate 169 provides a ligand contact to adenosine. Residues 174 to 198 (MNYMVYYNFFACVLVPLLLMLGVYL) traverse the membrane as a helical segment. At 199–234 (RIFLAARRQLKQMETQPLPGERARSTLQKEVHAAKS) the chain is on the cytoplasmic side. The helical transmembrane segment at 235 to 258 (LAIIVGLFALCWLPLHIINCFTFF) threads the bilayer. Asparagine 253 is a binding site for adenosine. A disulfide bond links cysteine 259 and cysteine 262. At 259-266 (CPECPHAP) the chain is on the extracellular side. The helical transmembrane segment at 267-290 (LWLMYPAIILSHFNSVVNPFIYAY) threads the bilayer. 2 residues coordinate adenosine: serine 277 and histidine 278. Residues 291 to 412 (RIREFRHTFH…PLAQDGAGVS (122 aa)) are Cytoplasmic-facing. Residues 368–412 (RASARESPGDTGLPDVELLSHELHGASPESPGLEGPLAQDGAGVS) form a disordered region.

This sequence belongs to the G-protein coupled receptor 1 family. Interacts (via cytoplasmic C-terminal domain) with USP4; the interaction is direct. May interact with DRD4. Interacts with NECAB2. Interacts (via cytoplasmic C-terminal domain) with GAS2L2; interaction enhances receptor-mediated adenylyl cyclase activity. In terms of processing, ubiquitinated. Deubiquitinated by USP4; leading to stabilization and expression at the cell surface.

The protein localises to the cell membrane. Its function is as follows. Receptor for adenosine. The activity of this receptor is mediated by G proteins which activate adenylyl cyclase. The polypeptide is Adenosine receptor A2a (ADORA2A) (Equus caballus (Horse)).